The primary structure comprises 54 residues: MPQLNPSPWLLMALSLWVCFPLMMLSLSSFLPLTLKTSLPSTLKSSPNPWILPW.

Residues 13-35 (ALSLWVCFPLMMLSLSSFLPLTL) form a helical membrane-spanning segment.

Belongs to the ATPase protein 8 family. Component of the ATP synthase complex composed at least of ATP5F1A/subunit alpha, ATP5F1B/subunit beta, ATP5MC1/subunit c (homooctomer), MT-ATP6/subunit a, MT-ATP8/subunit 8, ATP5ME/subunit e, ATP5MF/subunit f, ATP5MG/subunit g, ATP5MK/subunit k, ATP5MJ/subunit j, ATP5F1C/subunit gamma, ATP5F1D/subunit delta, ATP5F1E/subunit epsilon, ATP5PF/subunit F6, ATP5PB/subunit b, ATP5PD/subunit d, ATP5PO/subunit OSCP. ATP synthase complex consists of a soluble F(1) head domain (subunits alpha(3) and beta(3)) - the catalytic core - and a membrane F(0) domain - the membrane proton channel (subunits c, a, 8, e, f, g, k and j). These two domains are linked by a central stalk (subunits gamma, delta, and epsilon) rotating inside the F1 region and a stationary peripheral stalk (subunits F6, b, d, and OSCP).

The protein resides in the mitochondrion membrane. Its function is as follows. Subunit 8, of the mitochondrial membrane ATP synthase complex (F(1)F(0) ATP synthase or Complex V) that produces ATP from ADP in the presence of a proton gradient across the membrane which is generated by electron transport complexes of the respiratory chain. ATP synthase complex consist of a soluble F(1) head domain - the catalytic core - and a membrane F(1) domain - the membrane proton channel. These two domains are linked by a central stalk rotating inside the F(1) region and a stationary peripheral stalk. During catalysis, ATP synthesis in the catalytic domain of F(1) is coupled via a rotary mechanism of the central stalk subunits to proton translocation. In vivo, can only synthesize ATP although its ATP hydrolase activity can be activated artificially in vitro. Part of the complex F(0) domain. The chain is ATP synthase F(0) complex subunit 8 from Myxine glutinosa (Atlantic hagfish).